A 295-amino-acid chain; its full sequence is N-acetylmuramic acid 6-phosphate etherase (295 aa).

In terms of domain architecture, SIS spans Val54–Lys217. The active-site Proton donor is Glu82. The active site involves Glu113.

It belongs to the GCKR-like family. MurNAc-6-P etherase subfamily. As to quaternary structure, homodimer.

It catalyses the reaction N-acetyl-D-muramate 6-phosphate + H2O = N-acetyl-D-glucosamine 6-phosphate + (R)-lactate. It functions in the pathway amino-sugar metabolism; N-acetylmuramate degradation. In terms of biological role, specifically catalyzes the cleavage of the D-lactyl ether substituent of MurNAc 6-phosphate, producing GlcNAc 6-phosphate and D-lactate. The protein is N-acetylmuramic acid 6-phosphate etherase of Geobacillus thermodenitrificans (strain NG80-2).